A 504-amino-acid chain; its full sequence is Maturase K (504 aa).

This sequence belongs to the intron maturase 2 family. MatK subfamily.

It localises to the plastid. It is found in the chloroplast. Usually encoded in the trnK tRNA gene intron. Probably assists in splicing its own and other chloroplast group II introns. In Pseudoturritis turrita (Tower rock-cress), this protein is Maturase K.